The chain runs to 412 residues: Polyferredoxin protein MvhB (412 aa).

4Fe-4S ferredoxin-type domains follow at residues 1–29 (MIVVNKEDCIRCGACQGTCPTAAIEVTPE), 30–57 (DVIYCDICGGEPKCVDACPTGALKIEDL), 67–96 (GRIVFNPDKCNECGDCVEVCPPQILKLDEG), 97–127 (KVKKIPLQGFCVMCQKCVDICPVGVIGVEGI), 138–166 (EGPIFIADCVGCGMCVPECPVDAITLEKV), 168–197 (GVIEIDEDTCIKCGVCAQTCPWNAVYISGK), 207–236 (RKFELDEEACIGCNTCVEACPGDFIVPKSS), 238–266 (LTVELPAICTACGLCEQLCPVDAIDLDVE), 276–305 (EGLVWDEGKCDFIGACANICPNDAIRVVTR), 314–345 (EKVDEEPSFAMCTRCGACTMACPKGALSLVDM), 357–386 (KRVQYNPALCDQCGDCIEACPYDMLKLTDE), and 385–412 (DEKVPLKGFCILCDQCIPACPKGALSLK). [4Fe-4S] cluster-binding residues include C9, C12, C15, and C19. [4Fe-4S] cluster-binding residues include C76, C79, C82, C86, C107, C110, C113, C117, C146, C149, C152, C156, C177, C180, C183, C187, C216, C219, C222, C226, C246, C249, C252, and C256. Positions 325, 328, 331, 335, 366, 369, 372, 376, 394, 397, 400, and 404 each coordinate [4Fe-4S] cluster.

Requires [4Fe-4S] cluster as cofactor.

This chain is Polyferredoxin protein MvhB (mvhB), found in Methanothermobacter marburgensis (strain ATCC BAA-927 / DSM 2133 / JCM 14651 / NBRC 100331 / OCM 82 / Marburg) (Methanobacterium thermoautotrophicum).